Here is a 244-residue protein sequence, read N- to C-terminus: Orotidine 5'-phosphate decarboxylase (244 aa).

Residues Asp-12, Lys-34, 61-70 (DLKLFDIPNT), Thr-125, Arg-187, Gln-196, Gly-216, and Arg-217 contribute to the substrate site. Catalysis depends on Lys-63, which acts as the Proton donor.

It belongs to the OMP decarboxylase family. Type 1 subfamily. Homodimer.

It catalyses the reaction orotidine 5'-phosphate + H(+) = UMP + CO2. It functions in the pathway pyrimidine metabolism; UMP biosynthesis via de novo pathway; UMP from orotate: step 2/2. Functionally, catalyzes the decarboxylation of orotidine 5'-monophosphate (OMP) to uridine 5'-monophosphate (UMP). The polypeptide is Orotidine 5'-phosphate decarboxylase (Dictyoglomus thermophilum (strain ATCC 35947 / DSM 3960 / H-6-12)).